The chain runs to 150 residues: Plasmin C (150 aa).

Positions 1–14 (MRSFFLLCALVAVC) are cleaved as a signal peptide.

This Physarum polycephalum (Slime mold) protein is Plasmin C (PLSC).